The chain runs to 281 residues: uncharacterized protein (281 aa).

This is an uncharacterized protein from Acanthamoeba polyphaga (Amoeba).